The chain runs to 793 residues: Pentatricopeptide repeat-containing protein At1g03100, mitochondrial (793 aa).

The transit peptide at 1–87 directs the protein to the mitochondrion; it reads MFSLRKTKLQ…REAISSISGS (87 aa). 11 PPR repeats span residues 257–291, 292–322, 330–364, 458–492, 495–529, 530–564, 565–599, 601–631, 637–671, 672–707, and 713–747; these read NTQVLNVALAGCLLFGTTRKAEQLLDMIPKIGVKA, DANLLVIMAHIYERNGRREELRKLQRHIDEA, FWQFYNCLLMCHLKFGDLESASKMVLEMLRRGKVA, TEEIYVKLAKAFLESGKMKELAKFLLKAEHEDSPV, DNSMLINVINACISLGMLDQAHDLLDEMRMAGVRT, GSSVYSSLLKAYCNTNQTREVTSLLRDAQKAGIQL, DSSCYEALIQSQVIQNDTHGALNVFKEMKEAKILR, GNQKFEKLLKGCEGNAEAGLMSKLLREIREV, GVHDWNNVIHFFSKKGLMQDAEKALKRMRSLGHSP, NAQTFHSMVTGYAAIGSKYTEVTELWGEMKSIAAAT, and DQELLDAVLYTFVRGGFFSRANEVVEMMEKKNMFV.

Belongs to the PPR family. P subfamily.

It localises to the mitochondrion. The sequence is that of Pentatricopeptide repeat-containing protein At1g03100, mitochondrial from Arabidopsis thaliana (Mouse-ear cress).